A 347-amino-acid polypeptide reads, in one-letter code: Phenylalanine--tRNA ligase alpha subunit (347 aa).

Glu262 lines the Mg(2+) pocket.

It belongs to the class-II aminoacyl-tRNA synthetase family. Phe-tRNA synthetase alpha subunit type 1 subfamily. As to quaternary structure, tetramer of two alpha and two beta subunits. Mg(2+) is required as a cofactor.

It is found in the cytoplasm. It carries out the reaction tRNA(Phe) + L-phenylalanine + ATP = L-phenylalanyl-tRNA(Phe) + AMP + diphosphate + H(+). In Roseiflexus sp. (strain RS-1), this protein is Phenylalanine--tRNA ligase alpha subunit.